The following is a 348-amino-acid chain: Phenylalanine--tRNA ligase alpha subunit (348 aa).

Residue Glu-269 participates in Mg(2+) binding.

The protein belongs to the class-II aminoacyl-tRNA synthetase family. Phe-tRNA synthetase alpha subunit type 1 subfamily. In terms of assembly, tetramer of two alpha and two beta subunits. The cofactor is Mg(2+).

It localises to the cytoplasm. It catalyses the reaction tRNA(Phe) + L-phenylalanine + ATP = L-phenylalanyl-tRNA(Phe) + AMP + diphosphate + H(+). In Dechloromonas aromatica (strain RCB), this protein is Phenylalanine--tRNA ligase alpha subunit.